The following is a 77-amino-acid chain: Conotoxin Lt7.1 (77 aa).

The first 19 residues, 1–19 (MEKLTILLLVAALLMSTQG), serve as a signal peptide directing secretion. Residues 20 to 49 (LIQSGGENRPKEKIKFLSKRKTVAESWWEG) constitute a propeptide that is removed on maturation. 3 disulfide bridges follow: Cys51/Cys65, Cys58/Cys69, and Cys64/Cys74.

Belongs to the conotoxin O2 superfamily. As to expression, expressed by the venom duct.

The protein localises to the secreted. The polypeptide is Conotoxin Lt7.1 (Conus litteratus (Lettered cone)).